A 179-amino-acid chain; its full sequence is Large ribosomal subunit protein uL5 (179 aa).

This sequence belongs to the universal ribosomal protein uL5 family. Part of the 50S ribosomal subunit; part of the 5S rRNA/L5/L18/L25 subcomplex. Contacts the 5S rRNA and the P site tRNA. Forms a bridge to the 30S subunit in the 70S ribosome.

Its function is as follows. This is one of the proteins that bind and probably mediate the attachment of the 5S RNA into the large ribosomal subunit, where it forms part of the central protuberance. In the 70S ribosome it contacts protein S13 of the 30S subunit (bridge B1b), connecting the 2 subunits; this bridge is implicated in subunit movement. Contacts the P site tRNA; the 5S rRNA and some of its associated proteins might help stabilize positioning of ribosome-bound tRNAs. The polypeptide is Large ribosomal subunit protein uL5 (Azotobacter vinelandii (strain DJ / ATCC BAA-1303)).